We begin with the raw amino-acid sequence, 129 residues long: SOSS complex subunit C homolog (129 aa).

A disordered region spans residues 105 to 129 (RLEPLPSPATTPTTPNAPPSHSISK).

This sequence belongs to the SOSS-C family.

The chain is SOSS complex subunit C homolog from Drosophila simulans (Fruit fly).